Reading from the N-terminus, the 415-residue chain is Serine hydroxymethyltransferase (415 aa).

(6S)-5,6,7,8-tetrahydrofolate contacts are provided by residues Leu-121 and 125 to 127; that span reads GHL. Lys-229 carries the post-translational modification N6-(pyridoxal phosphate)lysine. 352–354 provides a ligand contact to (6S)-5,6,7,8-tetrahydrofolate; it reads TPF.

The protein belongs to the SHMT family. Homodimer. Requires pyridoxal 5'-phosphate as cofactor.

It localises to the cytoplasm. The enzyme catalyses (6R)-5,10-methylene-5,6,7,8-tetrahydrofolate + glycine + H2O = (6S)-5,6,7,8-tetrahydrofolate + L-serine. It participates in one-carbon metabolism; tetrahydrofolate interconversion. Its pathway is amino-acid biosynthesis; glycine biosynthesis; glycine from L-serine: step 1/1. Its function is as follows. Catalyzes the reversible interconversion of serine and glycine with tetrahydrofolate (THF) serving as the one-carbon carrier. This reaction serves as the major source of one-carbon groups required for the biosynthesis of purines, thymidylate, methionine, and other important biomolecules. Also exhibits THF-independent aldolase activity toward beta-hydroxyamino acids, producing glycine and aldehydes, via a retro-aldol mechanism. This Chromobacterium violaceum (strain ATCC 12472 / DSM 30191 / JCM 1249 / CCUG 213 / NBRC 12614 / NCIMB 9131 / NCTC 9757 / MK) protein is Serine hydroxymethyltransferase.